The chain runs to 188 residues: Elongation factor P (188 aa).

It belongs to the elongation factor P family.

The protein localises to the cytoplasm. It participates in protein biosynthesis; polypeptide chain elongation. Functionally, involved in peptide bond synthesis. Stimulates efficient translation and peptide-bond synthesis on native or reconstituted 70S ribosomes in vitro. Probably functions indirectly by altering the affinity of the ribosome for aminoacyl-tRNA, thus increasing their reactivity as acceptors for peptidyl transferase. The polypeptide is Elongation factor P (Caulobacter vibrioides (strain ATCC 19089 / CIP 103742 / CB 15) (Caulobacter crescentus)).